We begin with the raw amino-acid sequence, 125 residues long: Large ribosomal subunit protein bL21 (125 aa).

The protein belongs to the bacterial ribosomal protein bL21 family. In terms of assembly, part of the 50S ribosomal subunit. Contacts protein L20.

In terms of biological role, this protein binds to 23S rRNA in the presence of protein L20. The chain is Large ribosomal subunit protein bL21 from Synechococcus sp. (strain CC9902).